The chain runs to 159 residues: Ribonuclease P protein component 2 (159 aa).

This sequence belongs to the eukaryotic/archaeal RNase P protein component 2 family. As to quaternary structure, consists of a catalytic RNA component and at least 4-5 protein subunits.

Its subcellular location is the cytoplasm. The catalysed reaction is Endonucleolytic cleavage of RNA, removing 5'-extranucleotides from tRNA precursor.. Functionally, part of ribonuclease P, a protein complex that generates mature tRNA molecules by cleaving their 5'-ends. In Halorubrum lacusprofundi (strain ATCC 49239 / DSM 5036 / JCM 8891 / ACAM 34), this protein is Ribonuclease P protein component 2.